The sequence spans 573 residues: Protein translocase subunit SecD (573 aa).

Residues 13–33 (YLSVFLVMLIGIYLLVFFTGD) form a helical membrane-spanning segment. Residues 127–200 (AQPAAEEPQP…PPAEAPATDP (74 aa)) are disordered. Pro residues-rich tracts occupy residues 135–154 (QPAP…PPPA) and 161–194 (SPQP…PPAE). The next 5 helical transmembrane spans lie at 385-405 (AGMI…LLYY), 410-430 (LLTA…LVLL), 441-461 (AGIA…VVFF), 489-509 (IVSG…LAIG), and 514-534 (FAFT…LVTW).

This sequence belongs to the SecD/SecF family. SecD subfamily. As to quaternary structure, forms a complex with SecF. Part of the essential Sec protein translocation apparatus which comprises SecA, SecYEG and auxiliary proteins SecDF. Other proteins may also be involved.

The protein localises to the cell membrane. Functionally, part of the Sec protein translocase complex. Interacts with the SecYEG preprotein conducting channel. SecDF uses the proton motive force (PMF) to complete protein translocation after the ATP-dependent function of SecA. In Mycobacterium tuberculosis (strain CDC 1551 / Oshkosh), this protein is Protein translocase subunit SecD.